The primary structure comprises 512 residues: D-alanine--D-alanyl carrier protein ligase (512 aa).

Position 152–153 (152–153 (TS)) interacts with ATP. Aspartate 199 contacts D-alanine. 294-299 (NAYGPT) provides a ligand contact to ATP. Position 303 (valine 303) interacts with D-alanine. Residues aspartate 385, 397–400 (YGGR), and lysine 499 each bind ATP. Lysine 499 contributes to the D-alanine binding site.

This sequence belongs to the ATP-dependent AMP-binding enzyme family. DltA subfamily.

It is found in the cytoplasm. It carries out the reaction holo-[D-alanyl-carrier protein] + D-alanine + ATP = D-alanyl-[D-alanyl-carrier protein] + AMP + diphosphate. The protein operates within cell wall biogenesis; lipoteichoic acid biosynthesis. Functionally, catalyzes the first step in the D-alanylation of lipoteichoic acid (LTA), the activation of D-alanine and its transfer onto the D-alanyl carrier protein (Dcp) DltC. In an ATP-dependent two-step reaction, forms a high energy D-alanyl-AMP intermediate, followed by transfer of the D-alanyl residue as a thiol ester to the phosphopantheinyl prosthetic group of the Dcp. D-alanylation of LTA plays an important role in modulating the properties of the cell wall in Gram-positive bacteria, influencing the net charge of the cell wall. This Streptococcus equi subsp. equi (strain 4047) protein is D-alanine--D-alanyl carrier protein ligase.